A 267-amino-acid chain; its full sequence is 4-hydroxy-tetrahydrodipicolinate reductase (267 aa).

NAD(+) contacts are provided by residues 12-17 (GPRGRM), 100-102 (GTT), and 126-129 (APNF). Residue H156 is the Proton donor/acceptor of the active site. H157 contributes to the (S)-2,3,4,5-tetrahydrodipicolinate binding site. K160 acts as the Proton donor in catalysis. 166–167 (GT) is a (S)-2,3,4,5-tetrahydrodipicolinate binding site.

The protein belongs to the DapB family.

Its subcellular location is the cytoplasm. It catalyses the reaction (S)-2,3,4,5-tetrahydrodipicolinate + NAD(+) + H2O = (2S,4S)-4-hydroxy-2,3,4,5-tetrahydrodipicolinate + NADH + H(+). It carries out the reaction (S)-2,3,4,5-tetrahydrodipicolinate + NADP(+) + H2O = (2S,4S)-4-hydroxy-2,3,4,5-tetrahydrodipicolinate + NADPH + H(+). Its pathway is amino-acid biosynthesis; L-lysine biosynthesis via DAP pathway; (S)-tetrahydrodipicolinate from L-aspartate: step 4/4. Its function is as follows. Catalyzes the conversion of 4-hydroxy-tetrahydrodipicolinate (HTPA) to tetrahydrodipicolinate. The polypeptide is 4-hydroxy-tetrahydrodipicolinate reductase (Bacillus subtilis (strain 168)).